A 410-amino-acid chain; its full sequence is Chloroacetanilide N-alkylformylase, ferredoxin reductase component (410 aa).

FAD contacts are provided by Gly-14, Asp-36, Lys-49, Val-82, Arg-130, Asp-279, and Val-298.

This sequence belongs to the FAD-dependent oxidoreductase family. As to quaternary structure, the chloroacetanilide N-alkylformylase multicomponent enzyme system is composed of an oxygenase component (CndA) and an electron transfer component formed by a ferredoxin reductase (CndC1) and a ferredoxin (CndB1). In vitro, chloroacetanilide N-alkylformylase assays in which CndB1 is substituted for CndB2 demonstrate that the two enzymes possess nearly identical activities. It depends on FAD as a cofactor.

The enzyme catalyses 2 reduced [2Fe-2S]-[ferredoxin] + NAD(+) + H(+) = 2 oxidized [2Fe-2S]-[ferredoxin] + NADH. Its function is as follows. Component of the chloroacetanilide N-alkylformylase multicomponent enzyme system involved in the degradation of chloroacetanilide herbicides (N-alkoxyalkyl-N-chloroacetyl-substituted aniline derivatives). In vitro, catalyzes the transfers of electrons from ferredoxin (CndB1) to NADH. N-dealkylase utilizes NADH, but not NADPH, as the electron donor. The sequence is that of Chloroacetanilide N-alkylformylase, ferredoxin reductase component from Rhizorhabdus wittichii (strain DC-6 / KACC 16600) (Sphingomonas wittichii).